A 184-amino-acid polypeptide reads, in one-letter code: Large ribosomal subunit protein uL22 (184 aa).

Belongs to the universal ribosomal protein uL22 family. Part of the 50S ribosomal subunit.

Its function is as follows. This protein binds specifically to 23S rRNA. It makes multiple contacts with different domains of the 23S rRNA in the assembled 50S subunit and ribosome. The globular domain of the protein is located near the polypeptide exit tunnel on the outside of the subunit, while an extended beta-hairpin is found that lines the wall of the exit tunnel in the center of the 70S ribosome. The sequence is that of Large ribosomal subunit protein uL22 from Pyrobaculum calidifontis (strain DSM 21063 / JCM 11548 / VA1).